We begin with the raw amino-acid sequence, 350 residues long: GTPase Obg (350 aa).

The 159-residue stretch at 1–159 (MKLVDEAEIL…RLLKLELRLL (159 aa)) folds into the Obg domain. The segment at 127–146 (NMHFKSSVNRAPRQSTTGEE) is disordered. Over residues 130-143 (FKSSVNRAPRQSTT) the composition is skewed to polar residues. The OBG-type G domain occupies 160–337 (ADVGLLGFPN…IMKDVMAFFD (178 aa)). Residues 166 to 173 (GFPNAGKS), 191 to 195 (FTTLY), 213 to 216 (DVPG), 287 to 290 (NKAD), and 318 to 320 (SAL) contribute to the GTP site. 2 residues coordinate Mg(2+): serine 173 and threonine 193.

This sequence belongs to the TRAFAC class OBG-HflX-like GTPase superfamily. OBG GTPase family. As to quaternary structure, monomer. Mg(2+) is required as a cofactor.

It localises to the cytoplasm. Its function is as follows. An essential GTPase which binds GTP, GDP and possibly (p)ppGpp with moderate affinity, with high nucleotide exchange rates and a fairly low GTP hydrolysis rate. Plays a role in control of the cell cycle, stress response, ribosome biogenesis and in those bacteria that undergo differentiation, in morphogenesis control. The chain is GTPase Obg from Xanthomonas oryzae pv. oryzae (strain MAFF 311018).